We begin with the raw amino-acid sequence, 312 residues long: Malate dehydrogenase (312 aa).

NAD(+)-binding positions include 7 to 13 (GAAGGIG) and D34. 2 residues coordinate substrate: R81 and R87. Residues N94 and 117–119 (ITN) contribute to the NAD(+) site. Substrate contacts are provided by N119 and R153. H177 functions as the Proton acceptor in the catalytic mechanism. An NAD(+)-binding site is contributed by M227.

Belongs to the LDH/MDH superfamily. MDH type 1 family. In terms of assembly, homodimer.

The catalysed reaction is (S)-malate + NAD(+) = oxaloacetate + NADH + H(+). Catalyzes the reversible oxidation of malate to oxaloacetate. This Salmonella agona (strain SL483) protein is Malate dehydrogenase.